A 1641-amino-acid chain; its full sequence is MEGMALYLVAALLIGFPGSSHGALYTLITPGVLRTDTEEQILVEAHGDNTPKQLDIFVHDFPRKQKILFQKRVDMNPAGDMLVTPTIKIPAEEVSKDSRQNQYVVVQVTGPQVRLEKVVLLSYQSGFVFIQTDKGIYTPGSPVLYRVFSMDHNMRQMDKTVVVEFQTPEGIVVSSNRIDLNFTRPYNLPELGSLGTWKIVAKYEHSPENYTAYFDVRKYVLPSFEVHLQPSEKSFYIDGNENFHVSITARYLYGEEVEGVAFVLFGVKIDGAKKSIPDSLTRIPILDGDGEATLKRDTLRSRFPNLNELVGHTLYASVTVITESGSDMVATEQSGIHIVTSPYQIYFTKTPKYFKPGMPYELTVYVTNPDGSPAAKVPVVSEAIHSEGTTLSDGTAKLILNTPLDTQSLLITVRTNHGDLPRERQATKSMTATAYQTQGGSGNYLHVAITSTEIKPGDNLPVNFNVRGNANSLNQVKYFTYLVGRQPKGAGQNLVAMNLRITPDLIPSFRFVAYYQVGNNEIVADSVWVDVKDTCMGTLVVKGASLTDNQIHMPGAAMKIKLEGDPGAQVGLVAVDKAVYVLNDKYKISQAKIWDTIEKSDFGCTAGGGQNNLGVFEDAGLALTTSTNLNTKQRSDTKCPQPANRRRRSSVLLLDSKASKAAQFQDQDLRKCCEDSMHENPMGYTCEKRAKYIQEGDACKAAFLECCRYIKGILDENQWESGLFLPRNDNEDGFIQDSDIIPRTDFPKSWLWHTVQLTEQPNSNGISSKTMSIYLKESITTWEVLAVSFTPTKGICVAEPYEIKVMKDFFIDLRVPYSVVRKEQVEIRAVLYNYAGRDIYVRVELLYNPAFCSASTEEQRYRQQFTIKALSSRAVPFVIVPLQQGLHDIEVRASVQGWESVSDGVKKKLKVVPEGVQKCIVTIIKLDPRAKGVDGTQREVVKARKLDDKVPDTEIETKITIQADPVAQIIENSIDGSKLNHLIITPSGCGEQNMIRMTAPVIATYYLDTTEQWETLGRNHRNEAVKQIMTGYAQQMVYKKANHSYAAFTNRASSTWLTAYVVKVFAMATKMVAGISHEIICGGVRWLILNRQQPDGAFKENAPVLSGTMQGGIQGDESEVTVTAFTLVALLESKTICNDSVNSLDSSIKKATDYLLKKYEKLQRPYTTALTAYALAAADRLNDDRVLMAASTGKNRWEEYNAHTHNVEGTSYALLALLKMKKFDQTGPIVRWLTDQNFYGGTYGQTQATVMLFQALAEYKIQMPTHKDLNLDIIIKLPERELPLHYRLDATNAILARTAETKLNQDFTVSASGDGTATMTILTVYNAQLQEKANVCNKFHLDVSVENIHLNFKHAKGAKGALMLKICMRYLGEVDSTMTIIDISMLTGFLPDAEDLTRLSEGVDRYISRYEVDNNMAQKVAVIIYLDKVSHSEDECLQFKILKHFEVGFIQPGSVKVYSYYNLDEQCTKFYHPDKGTGLLNKICVGNICRCAAETCSLLSQQEKIDLPLRIQKACASNVDYVYKTKLLRIEEKDGYDIYVMDVLEVIKPGTDENPQANARQYISQRKCQEALNLNVNDDYLIWGLRSDLWPMKDKFSYLITKNTWIERWPHEDECQDEEFQNLCLDFAHLSNILTIFGCPT.

An N-terminal signal peptide occupies residues M1–G22. N-linked (GlcNAc...) asparagine glycans are attached at residues N181 and N209. Mg(2+)-binding residues include P507, D530, V531, and D533. Disulfide bonds link C535–C796, C604–C639, C672–C699, C673–C706, C686–C707, C852–C1491, C1336–C1467, C1367–C1436, C1484–C1489, C1496–C1568, C1515–C1639, and C1615–C1624. The propeptide occupies R645–N728. A C3a-like domain region spans residues S649–R727. Positions C672–C707 constitute an Anaphylatoxin-like domain. The tract at residues E731–P742 is factor B binding site. The propeptide occupies H981–Y1259. The tract at residues H981–Y1259 is C3d-like domain. The segment at residues C989–Q992 is a cross-link (isoglutamyl cysteine thioester (Cys-Gln)). A factor H binding site region spans residues V1186–T1249. The 144-residue stretch at C1496–C1639 folds into the NTR domain.

It belongs to the venom complement C3 homolog family. As to quaternary structure, heterotrimer of alpha, beta and gamma chains; disulfide-linked. May be active with factor B in the presence of factor D. Post-translationally, first processed by the removal of 4 Arg residues by furin-type protease, forming two chains, alpha and gamma/beta precursor, linked by a disulfide bond. Probably, a cobrin-like protease cleaves the C3a-like domain and then the C3d-like domain, generating the mature venom factor (OVF). In terms of processing, the beta chain is not glycosylated. In terms of tissue distribution, expressed by the venom gland.

Its subcellular location is the secreted. Functionally, complement-activating protein in cobra venom. It is a structural and functional analog of complement component C3b, the activated form of C3. It binds factor B (CFB), which is subsequently cleaved by factor D (CFD) to form the bimolecular complex OVF/Bb. OVF/Bb is a C3/C5 convertase that cleaves both complement components C3 and C5. Structurally, it resembles the C3b degradation product C3c, which is not able to form a C3/C5 convertase. Unlike C3b/Bb, OVF/Bb is a stable complex and completely resistant to the actions of complement regulatory factors H (CFH) and I (CFI). Therefore, OVF continuously activates complement. As a result, OVF exhibits complement-depleting activity. This is Ophiophagus venom factor from Ophiophagus hannah (King cobra).